The chain runs to 247 residues: Ribose-5-phosphate isomerase (247 aa).

The protein belongs to the ribose 5-phosphate isomerase family.

Its subcellular location is the cytoplasm. It catalyses the reaction aldehydo-D-ribose 5-phosphate = D-ribulose 5-phosphate. Its pathway is carbohydrate degradation; pentose phosphate pathway; D-ribose 5-phosphate from D-ribulose 5-phosphate (non-oxidative stage): step 1/1. The sequence is that of Ribose-5-phosphate isomerase (RKI1) from Meyerozyma guilliermondii (strain ATCC 6260 / CBS 566 / DSM 6381 / JCM 1539 / NBRC 10279 / NRRL Y-324) (Yeast).